Reading from the N-terminus, the 91-residue chain is Acylphosphatase (91 aa).

The Acylphosphatase-like domain maps to 3–90; it reads RVSMIVSGQV…CGYSIFTIRR (88 aa). Residues Arg-18 and Asn-36 contribute to the active site.

The protein belongs to the acylphosphatase family.

The catalysed reaction is an acyl phosphate + H2O = a carboxylate + phosphate + H(+). The sequence is that of Acylphosphatase (acyP) from Methanospirillum hungatei JF-1 (strain ATCC 27890 / DSM 864 / NBRC 100397 / JF-1).